The sequence spans 569 residues: Proline--tRNA ligase (569 aa).

This sequence belongs to the class-II aminoacyl-tRNA synthetase family. ProS type 1 subfamily. In terms of assembly, homodimer.

It localises to the cytoplasm. The enzyme catalyses tRNA(Pro) + L-proline + ATP = L-prolyl-tRNA(Pro) + AMP + diphosphate. Catalyzes the attachment of proline to tRNA(Pro) in a two-step reaction: proline is first activated by ATP to form Pro-AMP and then transferred to the acceptor end of tRNA(Pro). As ProRS can inadvertently accommodate and process non-cognate amino acids such as alanine and cysteine, to avoid such errors it has two additional distinct editing activities against alanine. One activity is designated as 'pretransfer' editing and involves the tRNA(Pro)-independent hydrolysis of activated Ala-AMP. The other activity is designated 'posttransfer' editing and involves deacylation of mischarged Ala-tRNA(Pro). The misacylated Cys-tRNA(Pro) is not edited by ProRS. This Dehalococcoides mccartyi (strain ATCC BAA-2266 / KCTC 15142 / 195) (Dehalococcoides ethenogenes (strain 195)) protein is Proline--tRNA ligase.